A 47-amino-acid chain; its full sequence is UPF0391 membrane protein rrnAC2507 (47 aa).

The next 2 membrane-spanning stretches (helical) occupy residues 5 to 25 (VVLV…IAGL) and 27 to 47 (FRVA…TFLL).

This sequence belongs to the UPF0391 family.

Its subcellular location is the cell membrane. This is UPF0391 membrane protein rrnAC2507 from Haloarcula marismortui (strain ATCC 43049 / DSM 3752 / JCM 8966 / VKM B-1809) (Halobacterium marismortui).